We begin with the raw amino-acid sequence, 246 residues long: MDMAGHEVNSSSSSSGAESSSSSSGRQQYKKRPAGRTKFRETRHPVYRGVRRRGGAGRWVCEVRVPGKRGARLWLGTYVTAEAAARAHDAAMIALRGGAGGGGAACLNFQDSAWLLAVPPAAPSDLAGVRRAATEAVAGFLQRNKTTNGASVAEAMDEATSGVSAPPPLANNAGSSETPGPSSIDGTADTAAGAALDMFELDFFGEMDYDTYYASLAEGLLMEPPPAATALWDNGDEGADIALWSY.

Positions 1–43 (MDMAGHEVNSSSSSSGAESSSSSSGRQQYKKRPAGRTKFRETR) are disordered. The segment covering 10-24 (SSSSSSGAESSSSSS) has biased composition (low complexity). The segment covering 28 to 37 (QYKKRPAGRT) has biased composition (basic residues). The segment at residues 46–110 (VYRGVRRRGG…GGGAACLNFQ (65 aa)) is a DNA-binding region (AP2/ERF). Residues 155–187 (AMDEATSGVSAPPPLANNAGSSETPGPSSIDGT) are disordered. A compositionally biased stretch (polar residues) spans 172 to 181 (NAGSSETPGP).

The protein belongs to the AP2/ERF transcription factor family. ERF subfamily.

It is found in the nucleus. In terms of biological role, transcriptional activator that binds specifically to the DNA sequence 5'-[AG]CCGAC-3'. Binding to the C-repeat/DRE element mediates high salinity- and dehydration-inducible transcription. In Oryza sativa subsp. indica (Rice), this protein is Dehydration-responsive element-binding protein 1H (DREB1H).